A 236-amino-acid polypeptide reads, in one-letter code: MKTIVVCSGGLDSVSLAHKVAAEQQLIGLVSFDYGQRHRKELDFAAACAKRLGVPHEIIDITTIGKHLTGSALTDDVDVPDGHYAEETMKATVVPNRNAIMLAIAFGLAAAQKADAVAVAVHGGDHFIYPDCRPGFIDAFQQMQNQALDGYASVSLYAPFVMTSKADIVTDGARHKTPFAETWSCYKGGERHCGRCGTCVERREAFHLAGVEDPTDYEDPDFWVTATSGFSAQEVK.

Position 7–17 (7–17 (CSGGLDSVSLA)) interacts with ATP. Zn(2+)-binding residues include Cys185, Cys193, Cys196, and Cys199.

This sequence belongs to the QueC family. The cofactor is Zn(2+).

It catalyses the reaction 7-carboxy-7-deazaguanine + NH4(+) + ATP = 7-cyano-7-deazaguanine + ADP + phosphate + H2O + H(+). The protein operates within purine metabolism; 7-cyano-7-deazaguanine biosynthesis. In terms of biological role, catalyzes the ATP-dependent conversion of 7-carboxy-7-deazaguanine (CDG) to 7-cyano-7-deazaguanine (preQ(0)). This chain is 7-cyano-7-deazaguanine synthase, found in Rhizobium rhizogenes (strain K84 / ATCC BAA-868) (Agrobacterium radiobacter).